The primary structure comprises 306 residues: MKPTAEILTDILAEVRPLIGQGKVADYIPALAKVPNNKLAIAVYTNEGEVIKAGDADESFSIQSISKALSLTLAMCLYKQEEIWARVGKEPSGQAFNSLIQLEMEQGIPRNPFINAGAIVVADLLQSRLSAPRQRLLEFVRQLSGDTHIVYDKVVAASEMMHGDRNAAIAYLMRSFGNFENEVIPVLQNYFHACALKMSCVDLAKTFSYLANKGTSVQTGKPVVSPTQTKQLNALLATCGLYDGAGEFAYRVGMPGKSGVGGGIIAVVPGEMTIAVWSPELDASGNSLAGTKALELLSERIGRSIF.

Substrate-binding residues include Ser64, Asn115, Glu159, Asn166, Tyr190, Tyr242, and Val260.

The protein belongs to the glutaminase family. Homotetramer.

It carries out the reaction L-glutamine + H2O = L-glutamate + NH4(+). This chain is Glutaminase, found in Vibrio parahaemolyticus serotype O3:K6 (strain RIMD 2210633).